A 393-amino-acid chain; its full sequence is Phosphoglycerate kinase (393 aa).

Substrate-binding positions include 21 to 23 (DLN), Arg36, 59 to 62 (HLGR), Arg113, and Arg146. ATP contacts are provided by residues Lys197, Glu319, and 345-348 (GGDT).

It belongs to the phosphoglycerate kinase family. In terms of assembly, monomer.

Its subcellular location is the cytoplasm. It carries out the reaction (2R)-3-phosphoglycerate + ATP = (2R)-3-phospho-glyceroyl phosphate + ADP. It functions in the pathway carbohydrate degradation; glycolysis; pyruvate from D-glyceraldehyde 3-phosphate: step 2/5. The polypeptide is Phosphoglycerate kinase (Nitratidesulfovibrio vulgaris (strain DP4) (Desulfovibrio vulgaris)).